The primary structure comprises 185 residues: Ribonuclease HII (185 aa).

The RNase H type-2 domain maps to 1 to 185 (MKICGIDEAG…LKHLQGILEF (185 aa)). D7, E8, and D96 together coordinate a divalent metal cation.

It belongs to the RNase HII family. It depends on Mn(2+) as a cofactor. Mg(2+) serves as cofactor.

It is found in the cytoplasm. It catalyses the reaction Endonucleolytic cleavage to 5'-phosphomonoester.. In terms of biological role, endonuclease that specifically degrades the RNA of RNA-DNA hybrids. The protein is Ribonuclease HII of Campylobacter hominis (strain ATCC BAA-381 / DSM 21671 / CCUG 45161 / LMG 19568 / NCTC 13146 / CH001A).